The primary structure comprises 276 residues: Formamidopyrimidine-DNA glycosylase (276 aa).

The Schiff-base intermediate with DNA role is filled by Pro-2. Residue Glu-3 is the Proton donor of the active site. Lys-58 acts as the Proton donor; for beta-elimination activity in catalysis. DNA-binding residues include His-92, Arg-111, and Lys-154. The FPG-type zinc finger occupies 239-273 (QVYGHVGEECPRCGNIFEKIKVSGRGTTFCPHCQV). The Proton donor; for delta-elimination activity role is filled by Arg-263.

The protein belongs to the FPG family. As to quaternary structure, monomer. Zn(2+) is required as a cofactor.

It catalyses the reaction Hydrolysis of DNA containing ring-opened 7-methylguanine residues, releasing 2,6-diamino-4-hydroxy-5-(N-methyl)formamidopyrimidine.. The enzyme catalyses 2'-deoxyribonucleotide-(2'-deoxyribose 5'-phosphate)-2'-deoxyribonucleotide-DNA = a 3'-end 2'-deoxyribonucleotide-(2,3-dehydro-2,3-deoxyribose 5'-phosphate)-DNA + a 5'-end 5'-phospho-2'-deoxyribonucleoside-DNA + H(+). Involved in base excision repair of DNA damaged by oxidation or by mutagenic agents. Acts as a DNA glycosylase that recognizes and removes damaged bases. Has a preference for oxidized purines, such as 7,8-dihydro-8-oxoguanine (8-oxoG). Has AP (apurinic/apyrimidinic) lyase activity and introduces nicks in the DNA strand. Cleaves the DNA backbone by beta-delta elimination to generate a single-strand break at the site of the removed base with both 3'- and 5'-phosphates. This chain is Formamidopyrimidine-DNA glycosylase, found in Lactobacillus acidophilus (strain ATCC 700396 / NCK56 / N2 / NCFM).